A 172-amino-acid polypeptide reads, in one-letter code: Ribosome maturation factor RimM (172 aa).

Residues Pro-100 to Phe-172 enclose the PRC barrel domain.

It belongs to the RimM family. In terms of assembly, binds ribosomal protein uS19.

The protein resides in the cytoplasm. An accessory protein needed during the final step in the assembly of 30S ribosomal subunit, possibly for assembly of the head region. Essential for efficient processing of 16S rRNA. May be needed both before and after RbfA during the maturation of 16S rRNA. It has affinity for free ribosomal 30S subunits but not for 70S ribosomes. This Methylococcus capsulatus (strain ATCC 33009 / NCIMB 11132 / Bath) protein is Ribosome maturation factor RimM.